The chain runs to 150 residues: Large ribosomal subunit protein uL11 (150 aa).

Belongs to the universal ribosomal protein uL11 family. Part of the ribosomal stalk of the 50S ribosomal subunit. Interacts with L10 and the large rRNA to form the base of the stalk. L10 forms an elongated spine to which L12 dimers bind in a sequential fashion forming a multimeric L10(L12)X complex. One or more lysine residues are methylated.

In terms of biological role, forms part of the ribosomal stalk which helps the ribosome interact with GTP-bound translation factors. In Cereibacter sphaeroides (strain KD131 / KCTC 12085) (Rhodobacter sphaeroides), this protein is Large ribosomal subunit protein uL11.